We begin with the raw amino-acid sequence, 555 residues long: AP2-like ethylene-responsive transcription factor ANT (555 aa).

Disordered regions lie at residues 34–56 and 199–231; these read GGRE…SVPP and LSMS…NHQQ. 3 stretches are compositionally biased toward low complexity: residues 41–53, 199–208, and 218–231; these read SSST…SSSS, LSMSPGSQSS, and QNQN…NHQQ. 2 consecutive DNA-binding regions (AP2/ERF) follow at residues 283-349 and 385-443; these read QYRG…TNFS and IYRG…TNFD.

The protein belongs to the AP2/ERF transcription factor family. AP2 subfamily. In terms of assembly, interacts with ANL2, HDG2 and HDG10, and possibly with GL2, HDG3, HDG8, ATML1 and PDF2. In terms of tissue distribution, mostly expressed in developing flowers. Also present in mature flowers, siliques and seedlings, but not in mature roots, leaves and stems. Expressed in ovules and in vegetative and floral primordia.

Its subcellular location is the nucleus. Transcription activator that recognizes and binds to the DNA consensus sequence 5'-CAC[AG]N[AT]TNCCNANG-3'. Required for the initiation and growth of ovules integumenta, and for the development of female gametophyte. Plays a critical role in the development of gynoecium marginal tissues (e.g. stigma, style and septa), and in the fusion of carpels and of medial ridges leading to ovule primordia. Also involved in organs initiation and development, including floral organs. Maintains the meristematic competence of cells and consequently sustains expression of cell cycle regulators during organogenesis, thus controlling the final size of each organ by controlling their cell number. Regulates INO autoinduction and expression pattern. As ANT promotes petal cell identity and mediates down-regulation of AG in flower whorl 2, it functions as a class A homeotic gene. The polypeptide is AP2-like ethylene-responsive transcription factor ANT (Arabidopsis thaliana (Mouse-ear cress)).